A 389-amino-acid polypeptide reads, in one-letter code: Alkanesulfonate monooxygenase (389 aa).

This sequence belongs to the SsuD family.

It carries out the reaction an alkanesulfonate + FMNH2 + O2 = an aldehyde + FMN + sulfite + H2O + 2 H(+). Functionally, catalyzes the desulfonation of aliphatic sulfonates. This is Alkanesulfonate monooxygenase from Agrobacterium fabrum (strain C58 / ATCC 33970) (Agrobacterium tumefaciens (strain C58)).